A 299-amino-acid chain; its full sequence is Bifunctional protein FolD (299 aa).

NADP(+) contacts are provided by residues 166 to 168 (GRS), Ser191, and Ile232.

It belongs to the tetrahydrofolate dehydrogenase/cyclohydrolase family. Homodimer.

It carries out the reaction (6R)-5,10-methylene-5,6,7,8-tetrahydrofolate + NADP(+) = (6R)-5,10-methenyltetrahydrofolate + NADPH. It catalyses the reaction (6R)-5,10-methenyltetrahydrofolate + H2O = (6R)-10-formyltetrahydrofolate + H(+). It functions in the pathway one-carbon metabolism; tetrahydrofolate interconversion. In terms of biological role, catalyzes the oxidation of 5,10-methylenetetrahydrofolate to 5,10-methenyltetrahydrofolate and then the hydrolysis of 5,10-methenyltetrahydrofolate to 10-formyltetrahydrofolate. This chain is Bifunctional protein FolD, found in Anaplasma marginale (strain St. Maries).